The primary structure comprises 261 residues: Gap junction beta-6 protein (261 aa).

The Cytoplasmic portion of the chain corresponds to 1–22 (MDWGTLHTFVGGVNKHSTSIGK). A helical membrane pass occupies residues 23–45 (VWVTVLFVFRVMILVVAAQEVWG). Residues 46 to 75 (DEQEDFVCNTLQPGCRNVCYDHFFPVSHIR) are Extracellular-facing. A helical membrane pass occupies residues 76–98 (LWALQLIFVSTPALLVAMHVAYY). Residues 99–131 (RHEAARRFRRGETRSEFKDLEDIKRQKVRIEGS) lie on the Cytoplasmic side of the membrane. Residues 132–154 (LWWTYTSSIFFRIVFEAAFMYVF) traverse the membrane as a helical segment. Residues 155–192 (YFLYNGYHLPWVLKCGIQPCPNLVDCFISRPTEKTVFT) lie on the Extracellular side of the membrane. A helical transmembrane segment spans residues 193–215 (IFMISASVICMLLNVAELCYLLL). The Cytoplasmic portion of the chain corresponds to 216–261 (KVCFRRSKRAQTQKAPPNHALKESKQNEMNELISEGGQNAITGFPS).

The protein belongs to the connexin family. Beta-type (group I) subfamily. A connexon is composed of a hexamer of connexins. Interacts with CNST.

The protein resides in the cell membrane. Its subcellular location is the cell junction. The protein localises to the gap junction. Its function is as follows. One gap junction consists of a cluster of closely packed pairs of transmembrane channels, the connexons, through which materials of low MW diffuse from one cell to a neighboring cell. The sequence is that of Gap junction beta-6 protein (GJB6) from Bos taurus (Bovine).